The sequence spans 215 residues: MKYQLTALEARVIGCLLEKQVTTPEQYPLSVNGVVTACNQKTNREPVMNLSESEVQEQLDNLVKRHYLRTVSGFGNRVTKYEQRFCNSEFGDLKLSAAEVALITTLLLRGAQTPGELRSRAARMYEFSDMAEVESTLEQLANREDGPFVVRLAREPGKRESRYMHLFSGEVEDQPAVMDMSNAVDGDLQARVEALEIEVAELKQRLDSLLAHLGD.

Lysine 80 carries the post-translational modification N6-acetyllysine.

It belongs to the UPF0502 family.

The protein is UPF0502 protein YceH of Escherichia coli O45:K1 (strain S88 / ExPEC).